The sequence spans 776 residues: E3 ubiquitin-protein ligase UHRF1 (776 aa).

In terms of domain architecture, Ubiquitin-like spans 1-78 (MWIQVRTMDG…VQLLVRQAVA (78 aa)). The disordered stretch occupies residues 88-126 (AELSDSDSGCGSAQSESDKGSTHGESDVQSAGASGQTDT). Polar residues predominate over residues 93–102 (SDSGCGSAQS). The span at 103-113 (ESDKGSTHGES) shows a compositional bias: basic and acidic residues. Residues 114–126 (DVQSAGASGQTDT) are compositionally biased toward polar residues. 2 tudor-like regions span residues 135–201 (GFYK…PRAR) and 208–277 (QLEP…IEEP). Residues 278 to 298 (GSAEGPGASSDSPLKKGSNGP) are disordered. The tract at residues 290 to 299 (PLKKGSNGPE) is linker. The segment at 297–364 (GPECKVCKDD…DWYCPDCRND (68 aa)) adopts a PHD-type zinc-finger fold. 2 histone H3R2me0 binding regions span residues 331–335 (CDECD) and 351–353 (PDD). The 164-residue stretch at 417–580 (GPVPGVPVGT…FLVWRYLLKR (164 aa)) folds into the YDG domain. Residues 443 to 444 (HV) are required to promote base flipping. Residues 461-462 (AG) and aspartate 467 each bind DNA. Required for formation of a 5-methylcytosine-binding pocket regions lie at residues 464–467 (YEDD) and 476–479 (YTGS). The tract at residues 617–660 (EKEKENKNEDDIEETPTKGKRKRKSQSMEEKSSPTKGTPKKMKV) is disordered. At serine 649 the chain carries Phosphoserine; by CDK2. The segment at 706–745 (CICCQEVVYQPITTECQHNVCRECLQRSFKAKVYTCPACR) adopts an RING-type zinc-finger fold.

In terms of processing, phosphorylation at Ser-649 is required for gastrulation. In terms of tissue distribution, expressed in proliferating tissues. Highly expressed 24-48 hours after fertilization (hpf) in rapidly proliferating tissues, including the tectum, retina and brachial arches. Preferentially expressed in the liver bud and expression is maintained in the fully developed liver. Also expressed in the proximal gut. In adult, the highest expression is detected in testis.

The protein localises to the nucleus. Its subcellular location is the cytoplasm. It carries out the reaction S-ubiquitinyl-[E2 ubiquitin-conjugating enzyme]-L-cysteine + [acceptor protein]-L-lysine = [E2 ubiquitin-conjugating enzyme]-L-cysteine + N(6)-ubiquitinyl-[acceptor protein]-L-lysine.. Its pathway is protein modification; protein ubiquitination. Multidomain protein that acts as a key epigenetic regulator by bridging DNA methylation and chromatin modification. Specifically recognizes and binds hemimethylated DNA at replication forks via its YDG domain and recruits dnmt1 methyltransferase to ensure faithful propagation of the DNA methylation patterns through DNA replication. In addition to its role in maintenance of DNA methylation, also plays a key role in chromatin modification: through its tudor-like regions and PHD-type zinc fingers, specifically recognizes and binds histone H3 trimethylated at 'Lys-9' (H3K9me3) and unmethylated at 'Arg-2' (H3R2me0), respectively, and recruits chromatin proteins. Enriched in pericentric heterochromatin where it recruits different chromatin modifiers required for this chromatin replication. Also localizes to euchromatic regions where it negatively regulates transcription possibly by impacting DNA methylation and histone modifications. Has E3 ubiquitin-protein ligase activity by mediating the ubiquitination of target proteins. However, it is still unclear how E3 ubiquitin-protein ligase activity is related to its role in chromatin in vivo. Required for pregastrula and lens development. This is E3 ubiquitin-protein ligase UHRF1 (uhrf1) from Danio rerio (Zebrafish).